Reading from the N-terminus, the 286-residue chain is 4-diphosphocytidyl-2-C-methyl-D-erythritol kinase (286 aa).

Residue Lys-8 is part of the active site. Position 92 to 102 (92 to 102) interacts with ATP; that stretch reads PVSAGLAGGST. Asp-134 is a catalytic residue.

Belongs to the GHMP kinase family. IspE subfamily.

It catalyses the reaction 4-CDP-2-C-methyl-D-erythritol + ATP = 4-CDP-2-C-methyl-D-erythritol 2-phosphate + ADP + H(+). It functions in the pathway isoprenoid biosynthesis; isopentenyl diphosphate biosynthesis via DXP pathway; isopentenyl diphosphate from 1-deoxy-D-xylulose 5-phosphate: step 3/6. In terms of biological role, catalyzes the phosphorylation of the position 2 hydroxy group of 4-diphosphocytidyl-2C-methyl-D-erythritol. The sequence is that of 4-diphosphocytidyl-2-C-methyl-D-erythritol kinase from Caldicellulosiruptor bescii (strain ATCC BAA-1888 / DSM 6725 / KCTC 15123 / Z-1320) (Anaerocellum thermophilum).